A 577-amino-acid polypeptide reads, in one-letter code: Aspartate--tRNA(Asp/Asn) ligase (577 aa).

Residue E171 coordinates L-aspartate. Residues 195-198 (QLFK) are aspartate. R217 is an L-aspartate binding site. Residues 217 to 219 (RDE) and Q226 each bind ATP. H444 lines the L-aspartate pocket. E474 provides a ligand contact to ATP. An L-aspartate-binding site is contributed by R481. Residue 526–529 (GFDR) coordinates ATP.

This sequence belongs to the class-II aminoacyl-tRNA synthetase family. Type 1 subfamily. Homodimer.

It is found in the cytoplasm. The enzyme catalyses tRNA(Asx) + L-aspartate + ATP = L-aspartyl-tRNA(Asx) + AMP + diphosphate. Aspartyl-tRNA synthetase with relaxed tRNA specificity since it is able to aspartylate not only its cognate tRNA(Asp) but also tRNA(Asn). Reaction proceeds in two steps: L-aspartate is first activated by ATP to form Asp-AMP and then transferred to the acceptor end of tRNA(Asp/Asn). The protein is Aspartate--tRNA(Asp/Asn) ligase of Helicobacter pylori (strain HPAG1).